A 349-amino-acid polypeptide reads, in one-letter code: tRNA pseudouridine synthase D (349 aa).

Phe27 provides a ligand contact to substrate. Asp80 (nucleophile) is an active-site residue. Asn129 contacts substrate. One can recognise a TRUD domain in the interval 155-303 (GVPNYFGAQR…VEAARRAMLL (149 aa)). Residue Phe329 coordinates substrate.

This sequence belongs to the pseudouridine synthase TruD family.

It carries out the reaction uridine(13) in tRNA = pseudouridine(13) in tRNA. Functionally, responsible for synthesis of pseudouridine from uracil-13 in transfer RNAs. The sequence is that of tRNA pseudouridine synthase D from Klebsiella pneumoniae subsp. pneumoniae (strain ATCC 700721 / MGH 78578).